We begin with the raw amino-acid sequence, 189 residues long: Ribosome maturation factor RimM (189 aa).

Residues 110 to 189 enclose the PRC barrel domain; the sequence is DDEYYWKDLI…TVTVDWDPNF (80 aa).

The protein belongs to the RimM family. As to quaternary structure, binds ribosomal protein uS19.

The protein localises to the cytoplasm. In terms of biological role, an accessory protein needed during the final step in the assembly of 30S ribosomal subunit, possibly for assembly of the head region. Essential for efficient processing of 16S rRNA. May be needed both before and after RbfA during the maturation of 16S rRNA. It has affinity for free ribosomal 30S subunits but not for 70S ribosomes. The polypeptide is Ribosome maturation factor RimM (Blochmanniella pennsylvanica (strain BPEN)).